The chain runs to 294 residues: 4-hydroxy-tetrahydrodipicolinate synthase (294 aa).

Thr-45 is a binding site for pyruvate. Tyr-133 acts as the Proton donor/acceptor in catalysis. Lys-161 acts as the Schiff-base intermediate with substrate in catalysis. Ile-203 lines the pyruvate pocket.

It belongs to the DapA family. Homotetramer; dimer of dimers.

Its subcellular location is the cytoplasm. The catalysed reaction is L-aspartate 4-semialdehyde + pyruvate = (2S,4S)-4-hydroxy-2,3,4,5-tetrahydrodipicolinate + H2O + H(+). It functions in the pathway amino-acid biosynthesis; L-lysine biosynthesis via DAP pathway; (S)-tetrahydrodipicolinate from L-aspartate: step 3/4. Functionally, catalyzes the condensation of (S)-aspartate-beta-semialdehyde [(S)-ASA] and pyruvate to 4-hydroxy-tetrahydrodipicolinate (HTPA). This chain is 4-hydroxy-tetrahydrodipicolinate synthase, found in Shewanella sp. (strain MR-4).